Reading from the N-terminus, the 227-residue chain is TMF-regulated nuclear protein 1 (227 aa).

2 disordered regions span residues 1–72 (MPGC…ELQR) and 200–227 (GRLR…SPQR). Residues 22-55 (SPPPPWDPMPSSQPPPPTPTLTPTPTPGQSPPLP) show a composition bias toward pro residues.

As to quaternary structure, interacts with TMF1; may regulate TRNP1 proteasomal degradation. Ubiquitinated, leading to its degradation by the proteasome.

It localises to the nucleus. In terms of biological role, DNA-binding factor that regulates the expression of a subset of genes and plays a key role in tangential, radial, and lateral expansion of the brain neocortex. Regulates neural stem cells proliferation and the production of intermediate neural progenitors and basal radial glial cells affecting the process of cerebral cortex gyrification. May control the proliferation rate of cells by regulating their progression through key cell-cycle transition points. The polypeptide is TMF-regulated nuclear protein 1 (TRNP1) (Homo sapiens (Human)).